The chain runs to 190 residues: Threonylcarbamoyl-AMP synthase (190 aa).

Positions 9–190 constitute a YrdC-like domain; it reads FLQLALARQT…IDIVTGQQFR (182 aa).

It belongs to the SUA5 family. TsaC subfamily.

It is found in the cytoplasm. It carries out the reaction L-threonine + hydrogencarbonate + ATP = L-threonylcarbamoyladenylate + diphosphate + H2O. Its function is as follows. Required for the formation of a threonylcarbamoyl group on adenosine at position 37 (t(6)A37) in tRNAs that read codons beginning with adenine. Catalyzes the conversion of L-threonine, HCO(3)(-)/CO(2) and ATP to give threonylcarbamoyl-AMP (TC-AMP) as the acyladenylate intermediate, with the release of diphosphate. The protein is Threonylcarbamoyl-AMP synthase of Marinobacter nauticus (strain ATCC 700491 / DSM 11845 / VT8) (Marinobacter aquaeolei).